The sequence spans 146 residues: Large ribosomal subunit protein uL15 (146 aa).

Residues 1-45 (MTIKLHHLRPAPGSKTERTRVGRGEGSKGKTAGRGTKGTKARKNV) are disordered. Positions 15 to 28 (KTERTRVGRGEGSK) are enriched in basic and acidic residues.

This sequence belongs to the universal ribosomal protein uL15 family. Part of the 50S ribosomal subunit.

In terms of biological role, binds to the 23S rRNA. This Mycobacteroides abscessus (strain ATCC 19977 / DSM 44196 / CCUG 20993 / CIP 104536 / JCM 13569 / NCTC 13031 / TMC 1543 / L948) (Mycobacterium abscessus) protein is Large ribosomal subunit protein uL15.